Consider the following 359-residue polypeptide: Flavonoid 8-O-methyltransferase 1 (359 aa).

Aspartate 223 serves as a coordination point for S-adenosyl-L-methionine. The active-site Proton acceptor is histidine 261.

This sequence belongs to the class I-like SAM-binding methyltransferase superfamily. Cation-independent O-methyltransferase family. Expressed in leaves and trichomes, especially in cv. SD and cv. EMX-1, but barely in cv. MC and cv. SW.

The enzyme catalyses an 8-hydroxyflavone + S-adenosyl-L-methionine = an 8-methoxyflavone + S-adenosyl-L-homocysteine + H(+). It catalyses the reaction 4',7,8-trihydroxyflavone + S-adenosyl-L-methionine = 4',7-dihydroxy-8-methoxyflavone + S-adenosyl-L-homocysteine + H(+). The catalysed reaction is 7,8-dihydroxyflavone + S-adenosyl-L-methionine = 7-hydroxy-8-methoxyflavone + S-adenosyl-L-homocysteine + H(+). It carries out the reaction 3',4',7,8-tetrahydroxyflavone + S-adenosyl-L-methionine = 3',4,7-trihydroxy-8-methoxyflavone + S-adenosyl-L-homocysteine + H(+). It functions in the pathway flavonoid metabolism. Strongly inhibited by gardenin B (GARD B). Functionally, cation-independent flavonoid 8-O-methyltransferase involved in the biosynthesis of polymethoxylated flavonoids natural products such as nevadensin and salvigenin, aroma compounds which contribute to the flavor of sweet basil, and exhibit pharmacological activities such as anti-allergic, anti-oxidant, antibacterial, anti-proliferative, and anti-inflammatory effects. Catalyzes S-adenosylmethionine-dependent regioselective 8-O-methylation of flavonoids; mediates likely the conversion of pilosin (PIL) to nevadensin (NEV) and of 8-hydroxysalvigenin (8-OH-SALV) to gardenin B (GARD B). Can also use 3',4',7,8-tetrahydroxyflavone as substrate. Accepts other unnatural O-diphenols including 7,8,4'-trihydroxy-flavone and 7-O-methyl-8-hydroxy-flavone, and, with a lower efficiency, 7,8-dihydroxy-flavone, as substrates. In Ocimum basilicum (Sweet basil), this protein is Flavonoid 8-O-methyltransferase 1.